A 240-amino-acid chain; its full sequence is Chloroplastic group IIB intron splicing facilitator CRS2-B, chloroplastic (240 aa).

The protein belongs to the PTH family. CRS2 subfamily. As to quaternary structure, part of large ribonucleo-protein complexes that include group IIB introns and either CAF1 or CAF2.

It is found in the plastid. Its subcellular location is the chloroplast stroma. Required for the splicing of group IIB introns in chloroplasts. This is Chloroplastic group IIB intron splicing facilitator CRS2-B, chloroplastic (CRS2B) from Arabidopsis thaliana (Mouse-ear cress).